Reading from the N-terminus, the 291-residue chain is uncharacterized protein (291 aa).

The protein belongs to the pseudouridine synthase RluA family.

It catalyses the reaction a uridine in RNA = a pseudouridine in RNA. This is an uncharacterized protein from Synechocystis sp. (strain ATCC 27184 / PCC 6803 / Kazusa).